The following is a 245-amino-acid chain: 3-deoxy-manno-octulosonate cytidylyltransferase (245 aa).

This sequence belongs to the KdsB family.

The protein localises to the cytoplasm. It catalyses the reaction 3-deoxy-alpha-D-manno-oct-2-ulosonate + CTP = CMP-3-deoxy-beta-D-manno-octulosonate + diphosphate. It functions in the pathway nucleotide-sugar biosynthesis; CMP-3-deoxy-D-manno-octulosonate biosynthesis; CMP-3-deoxy-D-manno-octulosonate from 3-deoxy-D-manno-octulosonate and CTP: step 1/1. Its pathway is bacterial outer membrane biogenesis; lipopolysaccharide biosynthesis. Functionally, activates KDO (a required 8-carbon sugar) for incorporation into bacterial lipopolysaccharide in Gram-negative bacteria. The polypeptide is 3-deoxy-manno-octulosonate cytidylyltransferase (Rhodopseudomonas palustris (strain BisB18)).